The primary structure comprises 68 residues: Small ribosomal subunit protein bS21 (68 aa).

Belongs to the bacterial ribosomal protein bS21 family.

This Cereibacter sphaeroides (strain ATCC 17029 / ATH 2.4.9) (Rhodobacter sphaeroides) protein is Small ribosomal subunit protein bS21.